Consider the following 171-residue polypeptide: 3-hydroxydecanoyl-[acyl-carrier-protein] dehydratase (171 aa).

His70 is an active-site residue.

It belongs to the thioester dehydratase family. FabA subfamily. Homodimer.

The protein resides in the cytoplasm. The catalysed reaction is a (3R)-hydroxyacyl-[ACP] = a (2E)-enoyl-[ACP] + H2O. The enzyme catalyses (3R)-hydroxydecanoyl-[ACP] = (2E)-decenoyl-[ACP] + H2O. It catalyses the reaction (2E)-decenoyl-[ACP] = (3Z)-decenoyl-[ACP]. The protein operates within lipid metabolism; fatty acid biosynthesis. Necessary for the introduction of cis unsaturation into fatty acids. Catalyzes the dehydration of (3R)-3-hydroxydecanoyl-ACP to E-(2)-decenoyl-ACP and then its isomerization to Z-(3)-decenoyl-ACP. Can catalyze the dehydratase reaction for beta-hydroxyacyl-ACPs with saturated chain lengths up to 16:0, being most active on intermediate chain length. The chain is 3-hydroxydecanoyl-[acyl-carrier-protein] dehydratase from Shewanella denitrificans (strain OS217 / ATCC BAA-1090 / DSM 15013).